A 257-amino-acid chain; its full sequence is Acetylglutamate kinase (257 aa).

Substrate-binding positions include 43 to 44 (GG), arginine 65, and asparagine 157. Residues 180–185 (DVSGIL) and 208–210 (IIT) contribute to the ATP site.

Belongs to the acetylglutamate kinase family. ArgB subfamily. As to quaternary structure, homodimer.

It is found in the cytoplasm. The enzyme catalyses N-acetyl-L-glutamate + ATP = N-acetyl-L-glutamyl 5-phosphate + ADP. The protein operates within amino-acid biosynthesis; L-arginine biosynthesis; N(2)-acetyl-L-ornithine from L-glutamate: step 2/4. Catalyzes the ATP-dependent phosphorylation of N-acetyl-L-glutamate. The polypeptide is Acetylglutamate kinase (Salmonella paratyphi A (strain AKU_12601)).